The sequence spans 174 residues: Large ribosomal subunit protein uL10 (174 aa).

It belongs to the universal ribosomal protein uL10 family. In terms of assembly, part of the ribosomal stalk of the 50S ribosomal subunit. The N-terminus interacts with L11 and the large rRNA to form the base of the stalk. The C-terminus forms an elongated spine to which L12 dimers bind in a sequential fashion forming a multimeric L10(L12)X complex.

In terms of biological role, forms part of the ribosomal stalk, playing a central role in the interaction of the ribosome with GTP-bound translation factors. In Anaeromyxobacter dehalogenans (strain 2CP-1 / ATCC BAA-258), this protein is Large ribosomal subunit protein uL10.